The primary structure comprises 371 residues: Protein NDRG2 (371 aa).

The segment at 1–22 is disordered; that stretch reads MAELQEVQITEEKPLLPGQTPE. Residue A2 is modified to N-acetylalanine. T20 bears the Phosphothreonine mark. 2 positions are modified to phosphoserine: S326 and S328. T330 carries the phosphothreonine modification. The residue at position 332 (S332) is a Phosphoserine. T334 carries the phosphothreonine modification. Positions 334 to 371 are disordered; it reads TSAASIDGSRSRSRTLSQSSESGTLPSGPPGHTMEVSC. S335, S338, and S344 each carry phosphoserine. The residue at position 348 (T348) is a Phosphothreonine. Phosphoserine occurs at positions 350, 352, 353, and 355. Position 357 is a phosphothreonine (T357). S370 is modified (phosphoserine).

The protein belongs to the NDRG family. Broadly expressed, with highest levels in heart, liver, skeletal muscle and aorta.

The protein resides in the cytoplasm. It is found in the perinuclear region. The protein localises to the cell projection. Its subcellular location is the growth cone. Contributes to the regulation of the Wnt signaling pathway. Down-regulates CTNNB1-mediated transcriptional activation of target genes, such as CCND1, and may thereby act as tumor suppressor. May be involved in dendritic cell and neuron differentiation. The sequence is that of Protein NDRG2 (Ndrg2) from Rattus norvegicus (Rat).